The following is a 177-amino-acid chain: B-phycoerythrin beta chain (177 aa).

The phycourobilin site is built by Cys50 and Cys61. Residue Asn72 is modified to N4-methylasparagine. The (2R,3E)-phycoerythrobilin site is built by Cys82 and Cys158.

This sequence belongs to the phycobiliprotein family. Heteromer of 6 alpha, 6 beta and one gamma chain. Post-translationally, contains two covalently linked phycoerythrobilin chromophores and one covalently linked phycourobilin chromophore.

The protein resides in the plastid. It is found in the chloroplast thylakoid membrane. Light-harvesting photosynthetic bile pigment-protein from the phycobiliprotein complex. This is B-phycoerythrin beta chain (cpeB) from Porphyridium purpureum (Red alga).